Consider the following 682-residue polypeptide: Penicillin-binding protein activator LpoA (682 aa).

The N-terminal stretch at 1 to 26 is a signal peptide; it reads MLPLNSVRTHAGRLVPVMLAALFLAG. The N-palmitoyl cysteine moiety is linked to residue cysteine 27. The S-diacylglycerol cysteine moiety is linked to residue cysteine 27. Disordered stretches follow at residues 240-262 and 314-341; these read AKQL…TGET and ANNA…VSPT. Low complexity predominate over residues 248–262; sequence GGTPPAAAAPTTGET.

This sequence belongs to the LpoA family. Interacts with PBP1a.

It is found in the cell outer membrane. In terms of biological role, regulator of peptidoglycan synthesis that is essential for the function of penicillin-binding protein 1A (PBP1a). This chain is Penicillin-binding protein activator LpoA, found in Dickeya chrysanthemi (strain Ech1591) (Dickeya zeae (strain Ech1591)).